A 629-amino-acid chain; its full sequence is tRNA uridine 5-carboxymethylaminomethyl modification enzyme MnmG (629 aa).

FAD-binding positions include 13–18, Val125, and Ser180; that span reads GGGHAG. Position 273–287 (273–287) interacts with NAD(+); it reads GPRYCPSIEDKIHRF. Gln370 contacts FAD.

This sequence belongs to the MnmG family. As to quaternary structure, homodimer. Heterotetramer of two MnmE and two MnmG subunits. The cofactor is FAD.

Its subcellular location is the cytoplasm. NAD-binding protein involved in the addition of a carboxymethylaminomethyl (cmnm) group at the wobble position (U34) of certain tRNAs, forming tRNA-cmnm(5)s(2)U34. This chain is tRNA uridine 5-carboxymethylaminomethyl modification enzyme MnmG, found in Shewanella sp. (strain ANA-3).